Reading from the N-terminus, the 101-residue chain is Small ribosomal subunit protein bS18c (101 aa).

The segment covering 1–19 has biased composition (basic residues); the sequence is MNKSKRPFTKSKRSFRRRL. Residues 1-20 are disordered; sequence MNKSKRPFTKSKRSFRRRLP.

The protein belongs to the bacterial ribosomal protein bS18 family. In terms of assembly, part of the 30S ribosomal subunit.

The protein resides in the plastid. It is found in the chloroplast. This Arabis hirsuta (Hairy rock-cress) protein is Small ribosomal subunit protein bS18c.